Reading from the N-terminus, the 379-residue chain is L-lactate dehydrogenase (379 aa).

The FMN hydroxy acid dehydrogenase domain occupies 1–379 (MIISASTDYR…LSRDSLVKIP (379 aa)). A substrate-binding site is contributed by tyrosine 24. FMN is bound by residues serine 106 and glutamine 127. Tyrosine 129 is a binding site for substrate. Threonine 155 provides a ligand contact to FMN. A substrate-binding site is contributed by arginine 164. Position 251 (lysine 251) interacts with FMN. Histidine 275 functions as the Proton acceptor in the catalytic mechanism. Residue arginine 278 coordinates substrate. Position 306–330 (306–330 (DSGIRTGLDVVRMLALGADCTLLGR)) interacts with FMN.

This sequence belongs to the FMN-dependent alpha-hydroxy acid dehydrogenase family. The cofactor is FMN.

The protein localises to the cell inner membrane. The enzyme catalyses (S)-lactate + A = pyruvate + AH2. Catalyzes the conversion of L-lactate to pyruvate. Is coupled to the respiratory chain. The polypeptide is L-lactate dehydrogenase (Vibrio parahaemolyticus serotype O3:K6 (strain RIMD 2210633)).